A 291-amino-acid polypeptide reads, in one-letter code: UPF0173 metal-dependent hydrolase Rmet_5695 (291 aa).

It belongs to the UPF0173 family.

This Cupriavidus metallidurans (strain ATCC 43123 / DSM 2839 / NBRC 102507 / CH34) (Ralstonia metallidurans) protein is UPF0173 metal-dependent hydrolase Rmet_5695.